The chain runs to 1221 residues: Fibulin-2 (1221 aa).

Positions 1–26 (MLLQESAGVWLALALVTALTPSPSMA) are cleaved as a signal peptide. Residues 27–176 (VPWQDCTGAE…ELICYQLPGC (150 aa)) are subdomain NA (Cys-rich). The interval 27 to 434 (VPWQDCTGAE…DGSTKDLIET (408 aa)) is n. Residues 177 to 434 (HGNFSDAEEG…DGSTKDLIET (258 aa)) form a subdomain NB (Cys-free) region. Asn179 carries N-linked (GlcNAc...) asparagine glycosylation. Disordered stretches follow at residues 248 to 329 (PTAA…LIPD) and 341 to 399 (GAAP…PQHP). Acidic residues predominate over residues 270-283 (DTEEDEEEEEEETL). Positions 312-322 (QEKEAEAKAGP) are enriched in basic and acidic residues. The short motif at 421–423 (RGD) is the Cell attachment site element. 11 disulfide bridges follow: Cys435/Cys462, Cys436/Cys469, Cys449/Cys470, Cys479/Cys508, Cys492/Cys509, Cys511/Cys535, Cys512/Cys542, Cys525/Cys543, Cys598/Cys610, Cys606/Cys619, and Cys621/Cys634. Anaphylatoxin-like domains lie at 435 to 477 (CCAA…LKEK), 478 to 510 (SCVA…QCCD), and 511 to 543 (CCGL…LSCC). Asn497 carries an N-linked (GlcNAc...) asparagine glycan. Residues 594 to 635 (DQDECLMLPGELCQHLCINTVGSYRCACFPGFELQGDGRTCR) form the EGF-like 1; calcium-binding domain. The interval 633 to 661 (TCRPDRGAPQLDTARESAPRSESAQVSPN) is disordered. Positions 652–661 (RSESAQVSPN) are enriched in polar residues. One can recognise an EGF-like 2 domain in the interval 669 to 708 (QPNTCKDNGPCRQVCRVVGDTAMCSCFPGYAIMADGVSCE). 5 disulfides stabilise this stretch: Cys673–Cys683, Cys679–Cys692, Cys694–Cys707, Cys713–Cys726, and Cys720–Cys735. Positions 709-755 (DQDECLMGTHDCSWKQFCVNTLGSFYCVNHTVLCAEGYILNAHRKCV) constitute an EGF-like 3; calcium-binding domain. An N-linked (GlcNAc...) asparagine glycan is attached at Asn737. Cys742 and Cys754 are oxidised to a cystine. In terms of domain architecture, EGF-like 4; calcium-binding spans 756–800 (DINECVTDLHTCTRAEHCVNTPGSFQCYKALTCEPGYVLTDGECT). The 46-residue stretch at 801 to 846 (DVDECVTGTHNCQAGFSCQNTKGSFYCQARQRCMDGFLQDPEGNCV) folds into the EGF-like 5; calcium-binding domain. 3 disulfides stabilise this stretch: Cys805–Cys818, Cys812–Cys827, and Cys833–Cys845. The region spanning 847 to 894 (DINECTSLLEPCRSGFSCINTVGSYTCQRNPLVCGRGYHANEEGSECV) is the EGF-like 6; calcium-binding domain. The region spanning 895-937 (DVNECETGVHRCGEGQLCYNLPGSYRCDCKPGFQRDAFGRTCI) is the EGF-like 7; calcium-binding domain. 15 cysteine pairs are disulfide-bonded: Cys899-Cys912, Cys906-Cys921, Cys923-Cys936, Cys942-Cys954, Cys950-Cys963, Cys965-Cys978, Cys984-Cys993, Cys989-Cys1002, Cys1004-Cys1017, Cys1023-Cys1035, Cys1031-Cys1044, Cys1046-Cys1060, Cys1066-Cys1079, Cys1073-Cys1088, and Cys1093-Cys1105. Residues 938-979 (DVNECWVSPGRLCQHTCENTPGSYRCSCAAGFLLAADGKHCE) enclose the EGF-like 8; calcium-binding domain. Residues 980–1018 (DVNECETRRCSQECANIYGSYQCYCRQGYQLAEDGHTCT) enclose the EGF-like 9; calcium-binding domain. The EGF-like 10; calcium-binding domain maps to 1019-1061 (DIDECAQGAGILCTFRCVNVPGSYQCACPEQGYTMMANGRSCK). In terms of domain architecture, EGF-like 11; calcium-binding spans 1062 to 1106 (DLDECALGTHNCSEAETCHNIQGSFRCLRFDCPPNYVRVSETKCE). The N-linked (GlcNAc...) asparagine glycan is linked to Asn1072. Residues 1111-1221 (QDITECQTSP…MYIFFTTFAP (111 aa)) are domain III.

It belongs to the fibulin family. As to quaternary structure, homotrimer; disulfide-linked. Interacts with LAMA2. Interacts with FBN1 (via N-terminal domain). Forms a ternary complex with ELN and FBN1. Component of both basement membranes and other connective tissues.

The protein resides in the secreted. It is found in the extracellular space. The protein localises to the extracellular matrix. Its binding to fibronectin and some other ligands is calcium dependent. May act as an adapter that mediates the interaction between FBN1 and ELN. This chain is Fibulin-2 (Fbln2), found in Mus musculus (Mouse).